The chain runs to 539 residues: Chaperonin GroEL (539 aa).

ATP contacts are provided by residues 29–32 (TIGP), 86–90 (DGTTT), G413, 476–478 (NAA), and D492.

It belongs to the chaperonin (HSP60) family. As to quaternary structure, forms a cylinder of 14 subunits composed of two heptameric rings stacked back-to-back. Interacts with the co-chaperonin GroES.

The protein resides in the cytoplasm. It catalyses the reaction ATP + H2O + a folded polypeptide = ADP + phosphate + an unfolded polypeptide.. Functionally, together with its co-chaperonin GroES, plays an essential role in assisting protein folding. The GroEL-GroES system forms a nano-cage that allows encapsulation of the non-native substrate proteins and provides a physical environment optimized to promote and accelerate protein folding. In Staphylococcus epidermidis, this protein is Chaperonin GroEL.